The sequence spans 598 residues: MLKTHSCALTQENIGTEVTLAGWVHRRRDHGGVIFIDLRDREGIVQVVFNPEQSAACLDIGKELRSEYVLQVKGTVSHRPAGTENSRMLSGLVEVVAEGAKILNTAKTPPFYINEEVEVDESLRLKYRYLDIRRQGMKNNLIIRHKTVSFMRQFLNDRGFIEIETPILIKSTPEGARDYLVPSRLFPGQFFALPQSPQQLKQLLMVAGMEKYYQVARCFRDEDLRADRQPEFTQLDMEMSFVDENDMMQLMEDLFTGLVASVRPDMKYNKKFPRISFADAMEKYGCDKPDLRFGMELADITDIGASSAFGVFKNVAAQGGAIKAISAPGCGGYNKSQQEELINLAKKYGAAGLVPISLGAESGELKDLTMEMVKSVSAKYLTLEEIKTIAERSGAKPGGLILIVAGARKMVNSVLGEMRNHLAAKLDLCDKNELSFAFVVDFPLFQWDEEGKRWDSVHHPFTAPLESDLPLMDTDPARVGSRAYDVVCNGYEIAGGSIRIHQADLQRKVFHLLGYNNEQIDERFGHLLEAFEFGAPPHGGVAPGIDRFVMLLAGETSIREVIPFPKNQAAQDLLFGAPSVVDDKQIRDLHIRIQTEKE.

E174 is a binding site for L-aspartate. The interval 198–201 (QQLK) is aspartate. Residue R220 coordinates L-aspartate. Residues 220–222 (RDE) and Q229 contribute to the ATP site. H458 is an L-aspartate binding site. Residue E492 participates in ATP binding. R499 serves as a coordination point for L-aspartate. 544–547 (GIDR) lines the ATP pocket.

It belongs to the class-II aminoacyl-tRNA synthetase family. Type 1 subfamily. In terms of assembly, homodimer.

The protein resides in the cytoplasm. It catalyses the reaction tRNA(Asx) + L-aspartate + ATP = L-aspartyl-tRNA(Asx) + AMP + diphosphate. In terms of biological role, aspartyl-tRNA synthetase with relaxed tRNA specificity since it is able to aspartylate not only its cognate tRNA(Asp) but also tRNA(Asn). Reaction proceeds in two steps: L-aspartate is first activated by ATP to form Asp-AMP and then transferred to the acceptor end of tRNA(Asp/Asn). In Dehalococcoides mccartyi (strain ATCC BAA-2266 / KCTC 15142 / 195) (Dehalococcoides ethenogenes (strain 195)), this protein is Aspartate--tRNA(Asp/Asn) ligase.